Consider the following 139-residue polypeptide: Large ribosomal subunit protein uL16 (139 aa).

Residues 1 to 19 (MLIPRKVKHRKQHHPKRSG) show a composition bias toward basic residues. Residues 1-22 (MLIPRKVKHRKQHHPKRSGVAK) are disordered.

This sequence belongs to the universal ribosomal protein uL16 family. In terms of assembly, part of the 50S ribosomal subunit.

Binds 23S rRNA and is also seen to make contacts with the A and possibly P site tRNAs. The chain is Large ribosomal subunit protein uL16 from Acidothermus cellulolyticus (strain ATCC 43068 / DSM 8971 / 11B).